Here is a 160-residue protein sequence, read N- to C-terminus: Protein max (160 aa).

The span at Met-1 to Glu-13 shows a compositional bias: acidic residues. The disordered stretch occupies residues Met-1–Lys-40. Ser-2 carries the post-translational modification N-acetylserine. 2 positions are modified to phosphoserine: Ser-2 and Ser-11. In terms of domain architecture, bHLH spans Asp-23–Met-74. Basic and acidic residues predominate over residues Asn-29–Lys-40. Lys-66 carries the post-translational modification N6-acetyllysine. A leucine-zipper region spans residues His-81–Leu-102. Residues Lys-104–Ser-160 form a disordered region. Ser-107 carries the phosphoserine modification. Over residues Ser-107 to Thr-124 the composition is skewed to polar residues. Residues Lys-153 and Lys-154 each carry the N6-acetyllysine modification.

It belongs to the MAX family. In terms of assembly, efficient DNA binding requires dimerization with another bHLH protein. Binds DNA as a heterodimer with MYC or MAD. Part of the E2F6.com-1 complex in G0 phase composed of E2F6, MGA, MAX, TFDP1, CBX3, BAT8, EUHMTASE1, RING1, RNF2, MBLR, L3MBTL2 and YAF2. Component of some MLL1/MLL complex, at least composed of the core components KMT2A/MLL1, ASH2L, HCFC1/HCF1, WDR5 and RBBP5, as well as the facultative components BACC1, CHD8, E2F6, HSP70, INO80C, KANSL1, LAS1L, MAX, MCRS1, MGA, MYST1/MOF, PELP1, PHF20, PRP31, RING2, RUVB1/TIP49A, RUVB2/TIP49B, SENP3, TAF1, TAF4, TAF6, TAF7, TAF9 and TEX10. Interacts with SPAG9. The heterodimer MYC:MAX interacts with ABI1; the interaction may enhance MYC:MAX transcriptional activity. Phosphorylated.

It is found in the nucleus. It localises to the cell projection. Its subcellular location is the dendrite. Its function is as follows. Transcription regulator. Forms a sequence-specific DNA-binding protein complex with MYC or MAD which recognizes the core sequence 5'-CAC[GA]TG-3'. The MYC:MAX complex is a transcriptional activator, whereas the MAD:MAX complex is a repressor. CpG methylation of the recognition site greatly inhibits DNA binding, suggesting that DNA methylation may regulate the MYC:MAX complex in vivo. May repress transcription via the recruitment of a chromatin remodeling complex containing H3 'Lys-9' histone methyltransferase activity. Represses MYC transcriptional activity from E-box elements. This Mus musculus (Mouse) protein is Protein max.